A 153-amino-acid chain; its full sequence is Prostaglandin E synthase (153 aa).

The Lumenal portion of the chain corresponds to 1–13 (MPPPSLAMVSGQA). Residues 14 to 42 (LPAFLLCSTLLVIKMYAVAVITGQVRLRK) form a helical membrane-spanning segment. Arginine 39 is a glutathione binding site. At 43–61 (KAFANPEDALRHGGLQFHR) the chain is on the cytoplasmic side. The chain crosses the membrane as a helical span at residues 62 to 91 (DDQDVERCLRAHRNDMETIYPFLFLGLVYS). Residue 74–78 (RNDME) coordinates glutathione. Topologically, residues 92 to 96 (FLGPD) are lumenal. A helical membrane pass occupies residues 97–120 (PFVAQMHFLVFFLGRMVHTVAYLG). Positions 114 and 118 each coordinate glutathione. Residues 121 to 124 (KLRA) lie on the Cytoplasmic side of the membrane. A helical membrane pass occupies residues 125-153 (PTRSLAYTVAQLPCASMALQIVWEAARHL). Glutathione is bound at residue 127-131 (RSLAY).

Belongs to the MAPEG family. Homotrimer. It depends on glutathione as a cofactor.

It is found in the membrane. It localises to the cytoplasm. The protein localises to the perinuclear region. The enzyme catalyses prostaglandin H2 = prostaglandin E2. It catalyses the reaction 2-glyceryl-prostaglandin H2 = 2-glyceryl-prostaglandin E2. The catalysed reaction is prostaglandin G2 = (15S)-15-hydroperoxy-prostaglandin E2. It carries out the reaction 1-chloro-2,4-dinitrobenzene + glutathione = 2,4-dinitrophenyl-S-glutathione + chloride + H(+). The enzyme catalyses (5S)-hydroperoxy-(6E,8Z,11Z,14Z)-eicosatetraenoate + 2 glutathione = (5S)-hydroxy-(6E,8Z,11Z,14Z)-eicosatetraenoate + glutathione disulfide + H2O. The protein operates within lipid metabolism; prostaglandin biosynthesis. Functionally, terminal enzyme of the cyclooxygenase (COX)-2-mediated prostaglandin E2 (PGE2) biosynthetic pathway. Catalyzes the glutathione-dependent oxidoreduction of prostaglandin endoperoxide H2 (PGH2) to prostaglandin E2 (PGE2) in response to inflammatory stimuli. Plays a key role in inflammation response, fever and pain. Also catalyzes the oxidoreduction of endocannabinoids into prostaglandin glycerol esters and PGG2 into 15-hydroperoxy-PGE2. In addition, displays low glutathione transferase and glutathione-dependent peroxidase activities, toward 1-chloro-2,4-dinitrobenzene and 5-hydroperoxyicosatetraenoic acid (5-HPETE), respectively. The polypeptide is Prostaglandin E synthase (PTGES) (Equus caballus (Horse)).